Reading from the N-terminus, the 353-residue chain is Pleckstrin-2 (353 aa).

The residue at position 1 (M1) is an N-acetylmethionine. One can recognise a PH 1 domain in the interval 4–104; that stretch reads GVLKEGFLVK…WAFEITGAIH (101 aa). Residue S120 is modified to Phosphoserine. In terms of domain architecture, DEP spans 139-225; the sequence is SNTGIRSSPN…DSTALYTFAE (87 aa). The region spanning 247–353 is the PH 2 domain; the sequence is TVVKQGYLAK…EWIEAIKKLT (107 aa).

It localises to the cell projection. It is found in the lamellipodium membrane. The protein resides in the cytoplasm. The protein localises to the cytoskeleton. Functionally, may help orchestrate cytoskeletal arrangement. Contribute to lamellipodia formation. In Homo sapiens (Human), this protein is Pleckstrin-2 (PLEK2).